The chain runs to 256 residues: uncharacterized protein (256 aa).

2 helical membrane passes run 181 to 201 and 231 to 251; these read CCII…ASMV and GIAV…GLIA.

Its subcellular location is the cell membrane. This is an uncharacterized protein from Methanocaldococcus jannaschii (strain ATCC 43067 / DSM 2661 / JAL-1 / JCM 10045 / NBRC 100440) (Methanococcus jannaschii).